A 242-amino-acid chain; its full sequence is tRNA (guanine-N(1)-)-methyltransferase (242 aa).

S-adenosyl-L-methionine is bound by residues G113 and 133 to 138 (IGDYVL).

Belongs to the RNA methyltransferase TrmD family. Homodimer.

The protein resides in the cytoplasm. It catalyses the reaction guanosine(37) in tRNA + S-adenosyl-L-methionine = N(1)-methylguanosine(37) in tRNA + S-adenosyl-L-homocysteine + H(+). Functionally, specifically methylates guanosine-37 in various tRNAs. This chain is tRNA (guanine-N(1)-)-methyltransferase, found in Shewanella sediminis (strain HAW-EB3).